Consider the following 160-residue polypeptide: Cyclic pyranopterin monophosphate synthase (160 aa).

Substrate-binding positions include 74 to 76 (LSH) and 112 to 113 (ME). Aspartate 127 is an active-site residue.

It belongs to the MoaC family. As to quaternary structure, homohexamer; trimer of dimers.

It carries out the reaction (8S)-3',8-cyclo-7,8-dihydroguanosine 5'-triphosphate = cyclic pyranopterin phosphate + diphosphate. It participates in cofactor biosynthesis; molybdopterin biosynthesis. In terms of biological role, catalyzes the conversion of (8S)-3',8-cyclo-7,8-dihydroguanosine 5'-triphosphate to cyclic pyranopterin monophosphate (cPMP). The protein is Cyclic pyranopterin monophosphate synthase of Trichlorobacter lovleyi (strain ATCC BAA-1151 / DSM 17278 / SZ) (Geobacter lovleyi).